The sequence spans 2546 residues: MEENTNNIDNGHMGDNNNENNNNSNNNNNNNSNSSSSFVKGRIDSLNKSTNGLIKIGRSVENSNNSITSGGSSSNSGEISSNNNNNNNNNGILKNSTSGSKDNTPLSESSINLRSIKTSGENKLNSSSSSNSNNNNIGVINKGVSTNLKSIMNALSSKSSENLSNFNNNNSLSSSPLKENQLVKSFDKNITPSKNNSPRAHLNNNNNNNNNNNNNNNNNNNNNNNNNNNNNNNNNNNTTPTLNSPRNKNSIYNTNSNNNSNTTNSTPNSAITPNIIVENKIKEKIQLWGMLKSNCKKYKDMELNQIETSFGRGSADYNFDDEKVVSSNHFKIILHKTVLPYGISNGSLNNSPKPLSTIIPSSNTITTATTNNNNDNAESLTTYSESSEISTDSTGVCSSSSSTSSTLSSKSSSSSSFNKFMEFLLIYIEDNDSTNGTWVNGNKLNRGERVQLDDKSKITLSTPDFSSLSFTFESNISSLSDEEKGKLLKAIVILKDSLDDSTNSFGSSTTTTISGGGSGSSSVNSSGGGSGTTPINVTPNSSNVSVTKKVINRTPSFKMSNLSTKPEGFVSILKNEPTLKNIQLLLSTIKTSDDQWKENFIQTDCILMIVDLLSSNYKKLRYNEIDQAIDIECLSILSTIFTCSKSNQNALKQLSKSNELNFNDIFMLFLLNQQNSNHSVKTKSQFLQFLNSITSNEICHKMIISSIEKIHSIKKDKLKFKWLVESMVFESDFQYKLQSLTLINSLLSNCKNQTTLTKIKSDLQSLGIGKINDLLVLDSSIKEMSIQLTKFNNNFNSSSSSSSISSNSINNSQNNNNNNNNNNNTNNNNNNNSNNNNINNNNNNLNTRKNNFNCKTLNLKDPISLVLLLQNELKSNFSTSVPTSPTSKNPLITSNNNNTSIGNNSNNIITSILTDLYKIANNNNNNNNNTNNKPKMDSNSALTLLSDFSKIISSSISNEQEYQKSIPVLEEKIKILIPSFNNTCNNTTNNNSSAKNIEVDSSVNKSPNTEEDSTKKTINNSPAEDAQIVSASVPPPPPPPPGGNNNNESDVPSSSGGPPPPPPPPPPPGKSSGGGPPPPPPPPPKGGKGGPPPPPPIGGIGSKVVKVKEEQPSVPMKQLFWSKVPVAKTKKTIWENKSDKFELDKIQIEQLFCQKKPANGKGSPKDGIEKEKEEKLELLDPRRSYAVSILISKYKLTPIWVIDCLTSMDDKKLSKDMVRVLLHIVATNEEEEQFKKYEGDKSQLSDVDQFIIETLKVPKIRQRLECIEYKIQFESTLQELVLNAKCVQQVSTSIMSSTSFHGLLHFILRIGNYMNAGSSRGNAEGFKLGFLLTVGNTKSLDNKTSLLNYIIQFISEKYPQFLITKSTIPHLEQASRILWSEMLSQFEQLKSGMSMVQKELELQIKQIGSDNFTHKFKKFTSSKAEHLDSLQIFIKQVEETYQSTIAYFCEENIQPEEFFQIIFNFINLVLKVHKENEDIRIAALPKSKKYQEQQNKPTQNNDHSTKSKLSNLPSSSSINDESSSSASLSSLSTNVNANTENDNLELSKLGFLSKLRKKRSKSEQEPVVEPIQITPKVGSAASAEPSPSIKSRDKKESFKSPIFRSPKFKVSSISPKLKATLNSISKTLRKQQVESPSPNMSPFTSTAISEKASIYDKNINNIQPSSSSSSSSSSSSSSSTITGKKSHNTESEIKKEFISNSSMDKDKEKIKEKEKGTISKGKALLFGHSRSKSTTTSPSSSSSKKQIPSLSECLQESNKTHSRSSSYSPNSKVNSQLMSNPFIMMEQKQPKDSLPIAKDSKEIHNMGTTTTTTPIKVEKIVSVNEKPTIVTMQTKPIPLVPTTTTSTTTTTQTTPPPVTINEKEKETQSKEVITKDFRDIKLKQTGIIEEDRKIQQERQRQFKTFNGKLNSTNKFRTSSSAVFSRNKSLQNINSTKNPSSVGFGDLDLFQKENITINSIKQKLLLKQTQIRSTRTDSSRIKKGKNVSQIVKQVENESPLPNPNKTLSAIRRHNSNLSRKSSKSSNNSSTSSLESLVQTNVINGLNNLKSVSSSSSSSSSMVVNKNGIDDNQQKQQKQQQQQQQQQQQQQQLPQPQQQQQQQQQQQQQQQQQQQQQQQQPQQQSTTTTTISTHHPQLKQVQPQSPSSLSQQPTQQILKPAQPSSPLQSHYKPQQKPQTTYIPKPKPYIANPFPSSTTSTNSSPSNASDLTEVIKSTQSPFEREQTFTKPTLQPVKYPSSASSNSSSVSGSSQSTPLSAASLQPVGNRNLRKQHVTPPSSSISNSTATTKSKKEGNIRFVDQASPSSSSLEQSSNASNAGYTSPPRENSFSNLFKKHKKSHSKSKSTDNTLNGEIESVDENEKSRKKPKTVTKIIDFSKKLFSHKKSKSVDQSSKSNNTNNNNNNNNNNNNNNNNNNSNIDYNNSLNDVGSSSSFSSSSSSPTSNPFPIIQPPNQSPPTKNISSGNISNNTSYSSLGSMNGNNLVASPSSSITSCKPSPGAVSSTSSTLKTPDFFDHKKVQTPEQLGIKSTDIPKVIIIPPNFYQQPV.

13 disordered regions span residues 1–40, 61–108, 188–270, 369–414, 502–541, 802–849, 879–898, 987–1101, 1485–1529, 1558–1601, 1659–1775, 1840–1869, and 2014–2033; these read MEENTNNIDNGHMGDNNNENNNNSNNNNNNNSNSSSSFVK, ENSN…PLSE, KNIT…PNSA, TTNN…SSSS, TNSFGSSTTTTISGGGSGSSSVNSSGGGSGTTPINVTPNS, SSIS…NTRK, TSVPTSPTSKNPLITSNNNN, TTNN…GGIG, PKSK…ASLS, KRSK…FKSP, INNI…KVNS, VPTTTTSTTTTTQTTPPPVTINEKEKETQS, and SNLSRKSSKSSNNSSTSSLE. Composition is skewed to low complexity over residues 16 to 37 and 62 to 98; these read NNNENNNNSNNNNNNNSNSSSS and NSNNSITSGGSSSNSGEISSNNNNNNNNNGILKNSTS. Polar residues-rich tracts occupy residues 99–108 and 188–198; these read GSKDNTPLSE and KNITPSKNNSP. Low complexity-rich tracts occupy residues 203 to 237 and 247 to 270; these read NNNNNNNNNNNNNNNNNNNNNNNNNNNNNNNNNNN and NKNSIYNTNSNNNSNTTNSTPNSA. Over residues 377–389 the composition is skewed to polar residues; sequence AESLTTYSESSEI. Composition is skewed to low complexity over residues 390–414 and 502–513; these read STDSTGVCSSSSSTSSTLSSKSSSS and TNSFGSSTTTTI. The 54-residue stretch at 391–444 folds into the FHA domain; it reads TDSTGVCSSSSSTSSTLSSKSSSSSSFNKFMEFLLIYIEDNDSTNGTWVNGNKL. The 507-residue stretch at 457–963 folds into the GBD/FH3 domain; it reads KITLSTPDFS…SSISNEQEYQ (507 aa). Composition is skewed to polar residues over residues 879–891 and 992–1007; these read TSVPTSPTSKNPL and SSAKNIEVDSSVNKSP. Positions 1033-1042 are enriched in pro residues; that stretch reads VPPPPPPPPG. Residues 1043-1056 show a composition bias toward low complexity; the sequence is GNNNNESDVPSSSG. Over residues 1057-1097 the composition is skewed to pro residues; the sequence is GPPPPPPPPPPPGKSSGGGPPPPPPPPPKGGKGGPPPPPPI. In terms of domain architecture, FH1 spans 1072–1098; the sequence is SGGGPPPPPPPPPKGGKGGPPPPPPIG. The 390-residue stretch at 1106–1495 folds into the FH2 domain; that stretch reads KVKEEQPSVP…KSKKYQEQQN (390 aa). A compositionally biased stretch (polar residues) spans 1492 to 1502; the sequence is EQQNKPTQNND. Low complexity predominate over residues 1507-1529; sequence SKLSNLPSSSSINDESSSSASLS. The region spanning 1563 to 1593 is the DAD domain; sequence EQEPVVEPIQITPKVGSAASAEPSPSIKSRD. Residues 1665–1679 show a composition bias toward low complexity; that stretch reads SSSSSSSSSSSSSSS. Over residues 1687–1717 the composition is skewed to basic and acidic residues; sequence HNTESEIKKEFISNSSMDKDKEKIKEKEKGT. Positions 1732–1745 are enriched in low complexity; that stretch reads KSTTTSPSSSSSKK. Residues 1746–1757 are compositionally biased toward polar residues; the sequence is QIPSLSECLQES. 2 stretches are compositionally biased toward low complexity: residues 1763–1775 and 1841–1853; these read RSSSYSPNSKVNS and PTTTTSTTTTTQT. A coiled-coil region spans residues 2067–2118; it reads IDDNQQKQQKQQQQQQQQQQQQQQLPQPQQQQQQQQQQQQQQQQQQQQQQQQ. The segment covering 2121–2154 has biased composition (low complexity); the sequence is QQSTTTTTISTHHPQLKQVQPQSPSSLSQQPTQQ. 3 disordered regions span residues 2121-2369, 2381-2473, and 2485-2510; these read QQST…PKTV, SHKK…SYSS, and SPSSSITSCKPSPGAVSSTSSTLKTP. A compositionally biased stretch (polar residues) spans 2160 to 2179; sequence QPSSPLQSHYKPQQKPQTTY. 2 stretches are compositionally biased toward low complexity: residues 2188-2206 and 2237-2256; these read ANPFPSSTTSTNSSPSNAS and SSASSNSSSVSGSSQSTPLS. Over residues 2274 to 2287 the composition is skewed to polar residues; that stretch reads TPPSSSISNSTATT. Residues 2302 to 2315 are compositionally biased toward low complexity; it reads SPSSSSLEQSSNAS. Over residues 2332–2342 the composition is skewed to basic residues; that stretch reads FKKHKKSHSKS. Composition is skewed to low complexity over residues 2388-2439, 2459-2473, and 2485-2497; these read VDQS…SSSS, NISSGNISNNTSYSS, and SPSSSITSCKPSP. Polar residues predominate over residues 2499 to 2508; sequence AVSSTSSTLK.

The protein belongs to the formin homology family. Diaphanous subfamily. Interacts (via GBD/FH3 domain) with activated Rho-GTPases.

In terms of biological role, formins play an important role in the nucleation of actin and the formation of linear actin filaments. The sequence is that of Formin-J (forJ) from Dictyostelium discoideum (Social amoeba).